Here is a 283-residue protein sequence, read N- to C-terminus: Para-Rep C10 (283 aa).

One can recognise a CRESS-DNA virus Rep endonuclease domain in the interval S3–W96. The short motif at C10–L13 is the RCR-1 element. Residues E36 and H42 each coordinate a divalent metal cation. Positions H42–Q44 match the RCR-2 motif. Positions K51 to R71 match the Nuclear localization signal motif. Y79 serves as the catalytic For DNA cleavage activity. The RCR-3 motif lies at Y79 to K82. Residue E84 coordinates a divalent metal cation. Residues W96 to H102 carry the Nuclear localization signal motif. G172–S180 provides a ligand contact to ATP.

Belongs to the nanoviridea/circoviridae replication-associated protein family. Homooligomer (Potential). Rep binds to repeated DNA motifs (iterons). Mg(2+) serves as cofactor. It depends on Mn(2+) as a cofactor.

The protein localises to the host nucleus. The catalysed reaction is ATP + H2O = ADP + phosphate + H(+). In terms of biological role, initiates and terminates the replication only of its own subviral DNA molecule. The closed circular ssDNA genome is first converted to a superhelical dsDNA. Rep binds a specific hairpin at the genome origin of replication. Introduces an endonucleolytic nick within the intergenic region of the genome, thereby initiating the rolling circle replication (RCR). Following cleavage, binds covalently to the 5'-phosphate of DNA as a tyrosyl ester. The cleavage gives rise to a free 3'-OH that serves as a primer for the cellular DNA polymerase. The polymerase synthesizes the (+) strand DNA by rolling circle mechanism. After one round of replication, a Rep-catalyzed nucleotidyl transfer reaction releases a circular single-stranded virus genome, thereby terminating the replication. Displays origin-specific DNA cleavage, nucleotidyl transferase, ATPase and helicase activities. The sequence is that of Para-Rep C10 (C10) from Milk vetch dwarf C10 alphasatellite (MVDC10A).